The sequence spans 93 residues: UPF0147 protein PF0239 (93 aa).

It belongs to the UPF0147 family.

The sequence is that of UPF0147 protein PF0239 from Pyrococcus furiosus (strain ATCC 43587 / DSM 3638 / JCM 8422 / Vc1).